Consider the following 303-residue polypeptide: D-alanine--D-alanine ligase B (303 aa).

The ATP-grasp domain maps to 103–298 (KLLWKGAGLP…YEDLCLKVLD (196 aa)). 129-184 (ERQLGLPIFVKPSTEGSSIGVTKVKQPGELRAAFEEARKYDKVVIAEQFIGGGEYT) provides a ligand contact to ATP. The Mg(2+) site is built by Asp-252, Glu-265, and Asn-267.

The protein belongs to the D-alanine--D-alanine ligase family. Requires Mg(2+) as cofactor. Mn(2+) serves as cofactor.

It localises to the cytoplasm. It carries out the reaction 2 D-alanine + ATP = D-alanyl-D-alanine + ADP + phosphate + H(+). The protein operates within cell wall biogenesis; peptidoglycan biosynthesis. Functionally, cell wall formation. The chain is D-alanine--D-alanine ligase B from Chromobacterium violaceum (strain ATCC 12472 / DSM 30191 / JCM 1249 / CCUG 213 / NBRC 12614 / NCIMB 9131 / NCTC 9757 / MK).